We begin with the raw amino-acid sequence, 494 residues long: 3-octaprenyl-4-hydroxybenzoate carboxy-lyase (494 aa).

Mn(2+) is bound at residue Asn-172. Residues 175–177 (IYR), 189–191 (RWL), and 194–195 (RG) each bind prenylated FMN. Glu-238 is a binding site for Mn(2+). Asp-294 serves as the catalytic Proton donor.

It belongs to the UbiD family. As to quaternary structure, homohexamer. Requires prenylated FMN as cofactor. The cofactor is Mn(2+).

It localises to the cell membrane. The enzyme catalyses a 4-hydroxy-3-(all-trans-polyprenyl)benzoate + H(+) = a 2-(all-trans-polyprenyl)phenol + CO2. The protein operates within cofactor biosynthesis; ubiquinone biosynthesis. Its function is as follows. Catalyzes the decarboxylation of 3-octaprenyl-4-hydroxy benzoate to 2-octaprenylphenol, an intermediate step in ubiquinone biosynthesis. The protein is 3-octaprenyl-4-hydroxybenzoate carboxy-lyase of Albidiferax ferrireducens (strain ATCC BAA-621 / DSM 15236 / T118) (Rhodoferax ferrireducens).